Here is a 903-residue protein sequence, read N- to C-terminus: Probable leucine--tRNA ligase, mitochondrial (903 aa).

Position 68 is an N6-acetyllysine (Lys-68). A 'HIGH' region motif is present at residues 92–102; that stretch reads YPSGKLHMGHV. An N6-acetyllysine modification is found at Lys-236. Positions 639–643 match the 'KMSKS' region motif; that stretch reads KMSKS. Residue Lys-642 participates in ATP binding. Phosphoserine is present on Ser-711.

Belongs to the class-I aminoacyl-tRNA synthetase family.

It is found in the mitochondrion matrix. The catalysed reaction is tRNA(Leu) + L-leucine + ATP = L-leucyl-tRNA(Leu) + AMP + diphosphate. The protein is Probable leucine--tRNA ligase, mitochondrial (LARS2) of Pongo abelii (Sumatran orangutan).